The following is a 213-amino-acid chain: CDP-diacylglycerol--inositol 3-phosphatidyltransferase (213 aa).

Residues 1–5 (MPEEN) lie on the Cytoplasmic side of the membrane. Residues 6–26 (IFLFVPNLIGYARIVFAIISF) form a helical membrane-spanning segment. Position 27 (Tyr-27) is a topological domain, lumenal. Residues 28-48 (FMPCCPFTASSFYLLSGLLDA) form a helical membrane-spanning segment. Asp-47 and Asp-50 together coordinate Mg(2+). Residues 49–73 (FDGHAARALNQGTRFGAMLDMLTDR) lie on the Cytoplasmic side of the membrane. A CDP-1,2-diacyl-sn-glycerol is bound by residues Gly-51, Arg-55, and Thr-61. Mg(2+) contacts are provided by Asp-68 and Asp-72. The active-site Proton acceptor is Asp-72. A helical membrane pass occupies residues 74 to 94 (CATMCLLVNLALLYPRATLLF). Residue Gln-95 is a topological domain, lumenal. The chain crosses the membrane as a helical span at residues 96 to 116 (LSMSLDVASHWLHLHSSVVRG). The Cytoplasmic portion of the chain corresponds to 117-139 (SESHKMIDLSGNPVLRIYYTSRP). The chain crosses the membrane as a helical span at residues 140–160 (ALFTLCAGNELFYCLLYLFNF). At 161 to 174 (SEGPLVGSVGLFRM) the chain is on the lumenal side. A helical membrane pass occupies residues 175–195 (GLWVTAPIALLKSVISVIHLI). Topologically, residues 196–213 (TAARNMAALDAADRAKKK) are cytoplasmic.

This sequence belongs to the CDP-alcohol phosphatidyltransferase class-I family. It depends on Mn(2+) as a cofactor. Mg(2+) is required as a cofactor.

The protein resides in the endoplasmic reticulum membrane. Its subcellular location is the cell membrane. It catalyses the reaction a CDP-1,2-diacyl-sn-glycerol + myo-inositol = a 1,2-diacyl-sn-glycero-3-phospho-(1D-myo-inositol) + CMP + H(+). In terms of biological role, catalyzes the biosynthesis of phosphatidylinositol (PtdIns) as well as PtdIns:inositol exchange reaction. May thus act to reduce an excessive cellular PtdIns content. The exchange activity is due to the reverse reaction of PtdIns synthase and is dependent on CMP, which is tightly bound to the enzyme. The protein is CDP-diacylglycerol--inositol 3-phosphatidyltransferase of Mus musculus (Mouse).